A 174-amino-acid chain; its full sequence is Crossover junction endodeoxyribonuclease RuvC (174 aa).

Residues D8, E69, and D141 contribute to the active site. D8, E69, and D141 together coordinate Mg(2+).

Belongs to the RuvC family. In terms of assembly, homodimer which binds Holliday junction (HJ) DNA. The HJ becomes 2-fold symmetrical on binding to RuvC with unstacked arms; it has a different conformation from HJ DNA in complex with RuvA. In the full resolvosome a probable DNA-RuvA(4)-RuvB(12)-RuvC(2) complex forms which resolves the HJ. It depends on Mg(2+) as a cofactor.

The protein localises to the cytoplasm. It carries out the reaction Endonucleolytic cleavage at a junction such as a reciprocal single-stranded crossover between two homologous DNA duplexes (Holliday junction).. The RuvA-RuvB-RuvC complex processes Holliday junction (HJ) DNA during genetic recombination and DNA repair. Endonuclease that resolves HJ intermediates. Cleaves cruciform DNA by making single-stranded nicks across the HJ at symmetrical positions within the homologous arms, yielding a 5'-phosphate and a 3'-hydroxyl group; requires a central core of homology in the junction. The consensus cleavage sequence is 5'-(A/T)TT(C/G)-3'. Cleavage occurs on the 3'-side of the TT dinucleotide at the point of strand exchange. HJ branch migration catalyzed by RuvA-RuvB allows RuvC to scan DNA until it finds its consensus sequence, where it cleaves and resolves the cruciform DNA. The polypeptide is Crossover junction endodeoxyribonuclease RuvC (Xanthomonas euvesicatoria pv. vesicatoria (strain 85-10) (Xanthomonas campestris pv. vesicatoria)).